Here is a 61-residue protein sequence, read N- to C-terminus: MKLSALSLAFAIILMMTIMYTKADADASADAEADADAEAEAIWGALLGTLIPAITSAIQGK.

The signal sequence occupies residues 1–23; it reads MKLSALSLAFAIILMMTIMYTKA. Residues 24–41 constitute a propeptide that is removed on maturation; sequence DADASADAEADADAEAEA. Gln59 bears the Glutamine amide mark.

Belongs to the formicidae venom precursor-01 superfamily. Truncated sequences of this peptide have also been found in the venom. It is possible they have been cleaved in the venom. In terms of tissue distribution, expressed by the venom gland.

It localises to the secreted. Functionally, acidic peptide with potent hemolytic activities (94.8% at 50 uM). It also shows low antimicrobial activities against E.coli (MIC=50uM), as well as histamine-releasing activity (28.3% at 10 uM). Does not have activity against S.aureus, and S.cerevisiae. The chain is U-poneritoxin(01)-Om5a from Odontomachus monticola (Trap-jaw ant).